The primary structure comprises 354 residues: Chaperone protein dnaJ 49 (354 aa).

The 65-residue stretch at 99-163 (DYYAILGLEK…NSRRQFDQVG (65 aa)) folds into the J domain. A helical transmembrane segment spans residues 237–257 (CLTIIQILPFFLLLLLAYLPF).

This sequence belongs to the DnaJ family. C/III subfamily.

Its subcellular location is the membrane. Its function is as follows. Plays a continuous role in plant development probably in the structural organization of compartments. This chain is Chaperone protein dnaJ 49 (ATJ49), found in Arabidopsis thaliana (Mouse-ear cress).